We begin with the raw amino-acid sequence, 814 residues long: Echinoderm microtubule-associated protein-like 1 (814 aa).

Residues Ser31–Gln72 are a coiled coil. Residues Asn77 to Tyr185 form a disordered region. Residues Pro92–Thr101 are compositionally biased toward polar residues. The segment covering Leu103 to Ser115 has biased composition (low complexity). The residue at position 113 (Ser113) is a Phosphoserine. The span at Lys127 to Arg137 shows a compositional bias: polar residues. Basic and acidic residues predominate over residues Gly142–Gly152. Residues Asn155–Lys167 show a composition bias toward low complexity. Residues Lys175–Ile814 are tandem atypical propeller in EMLs. WD repeat units lie at residues Glu260–Ser309, Thr314–Trp357, Arg362–Leu399, Gln408–Lys445, Arg449–Gly488, Lys492–Thr529, Phe534–Ala571, Val577–Thr612, Asp616–Val654, Arg663–Pro700, Ser708–Tyr767, and Ala774–Val813.

The protein belongs to the WD repeat EMAP family. As to quaternary structure, homotrimer; self-association is mediated by the N-terminal coiled coil. Does not interact with EML3. Binds repolymerizing microtubules. Binds unpolymerized tubulins via its WD repeat region. Interacts with TASOR.

It localises to the cytoplasm. Its subcellular location is the perinuclear region. It is found in the cytoskeleton. Modulates the assembly and organization of the microtubule cytoskeleton, and probably plays a role in regulating the orientation of the mitotic spindle and the orientation of the plane of cell division. Required for normal proliferation of neuronal progenitor cells in the developing brain and for normal brain development. Does not affect neuron migration per se. This Rattus norvegicus (Rat) protein is Echinoderm microtubule-associated protein-like 1 (Eml1).